The following is a 266-amino-acid chain: Putative carbamate hydrolase RutD (266 aa).

The protein belongs to the AB hydrolase superfamily. Hydrolase RutD family.

The enzyme catalyses carbamate + 2 H(+) = NH4(+) + CO2. Involved in pyrimidine catabolism. May facilitate the hydrolysis of carbamate, a reaction that can also occur spontaneously. The polypeptide is Putative carbamate hydrolase RutD (Escherichia coli O139:H28 (strain E24377A / ETEC)).